The following is a 160-amino-acid chain: MAKQKKHPTGTIAQNKKARHDYFIEHKFEAGLVLSGWEVKSLRAGKAHLTDSYVLLKDGEAWLFGSHITPLTTASTHVIADPIRTRKLLLNKRELERLEAAVAQKGYTCVAMSLYWSKHLIKCEIALGKGKKEFDKRDTVRERDSNRELQRTMRNKGKEE.

The interval 132–160 (KEFDKRDTVRERDSNRELQRTMRNKGKEE) is disordered.

The protein belongs to the SmpB family.

Its subcellular location is the cytoplasm. Required for rescue of stalled ribosomes mediated by trans-translation. Binds to transfer-messenger RNA (tmRNA), required for stable association of tmRNA with ribosomes. tmRNA and SmpB together mimic tRNA shape, replacing the anticodon stem-loop with SmpB. tmRNA is encoded by the ssrA gene; the 2 termini fold to resemble tRNA(Ala) and it encodes a 'tag peptide', a short internal open reading frame. During trans-translation Ala-aminoacylated tmRNA acts like a tRNA, entering the A-site of stalled ribosomes, displacing the stalled mRNA. The ribosome then switches to translate the ORF on the tmRNA; the nascent peptide is terminated with the 'tag peptide' encoded by the tmRNA and targeted for degradation. The ribosome is freed to recommence translation, which seems to be the essential function of trans-translation. In Pseudomonas entomophila (strain L48), this protein is SsrA-binding protein.